A 319-amino-acid polypeptide reads, in one-letter code: Ribosomal protein L11 methyltransferase (319 aa).

4 residues coordinate S-adenosyl-L-methionine: T165, G186, D208, and N251.

The protein belongs to the methyltransferase superfamily. PrmA family.

It localises to the cytoplasm. It carries out the reaction L-lysyl-[protein] + 3 S-adenosyl-L-methionine = N(6),N(6),N(6)-trimethyl-L-lysyl-[protein] + 3 S-adenosyl-L-homocysteine + 3 H(+). Functionally, methylates ribosomal protein L11. This is Ribosomal protein L11 methyltransferase from Limosilactobacillus reuteri subsp. reuteri (strain JCM 1112) (Lactobacillus reuteri).